Reading from the N-terminus, the 121-residue chain is Large ribosomal subunit protein bL20 (121 aa).

The protein belongs to the bacterial ribosomal protein bL20 family.

In terms of biological role, binds directly to 23S ribosomal RNA and is necessary for the in vitro assembly process of the 50S ribosomal subunit. It is not involved in the protein synthesizing functions of that subunit. The polypeptide is Large ribosomal subunit protein bL20 (Methylorubrum populi (strain ATCC BAA-705 / NCIMB 13946 / BJ001) (Methylobacterium populi)).